A 334-amino-acid polypeptide reads, in one-letter code: Sterol 4-C-methyltransferase strm-1 (334 aa).

It belongs to the class I-like SAM-binding methyltransferase superfamily. Erg6/SMT family. Expressed in the pharynx and hypodermal syncytium.

The enzyme catalyses 5alpha-cholest-7-en-3-one + S-adenosyl-L-methionine = 4alpha-methyl-5alpha-cholest-7-en-3-one + S-adenosyl-L-homocysteine + H(+). It functions in the pathway steroid hormone biosynthesis; dafachronic acid biosynthesis. Functionally, catalyzes the methyl transfer from S-adenosyl-methionine to the C-4 of the A-ring sterols such as lathosterone (5alpha-cholest-7-en-3-one) thereby rendering them unsuitable as ligand precursors. May irreversibly shunt sterols away from hormone dafachronic acid production. Dafachronic acids act as ligands and bind directly to the nuclear hormone receptor (NHR) daf-12 suppressing dauer formation and inducing reproductive growth. By reducing the biosynthesis of dafachronic acids, this methyltransferase can regulate dauer larva formation. This Caenorhabditis elegans protein is Sterol 4-C-methyltransferase strm-1 (strm-1).